We begin with the raw amino-acid sequence, 309 residues long: Transaldolase (309 aa).

Lysine 125 serves as the catalytic Schiff-base intermediate with substrate.

Belongs to the transaldolase family. Type 1 subfamily. As to quaternary structure, homodimer.

The protein resides in the cytoplasm. It catalyses the reaction D-sedoheptulose 7-phosphate + D-glyceraldehyde 3-phosphate = D-erythrose 4-phosphate + beta-D-fructose 6-phosphate. Its pathway is carbohydrate degradation; pentose phosphate pathway; D-glyceraldehyde 3-phosphate and beta-D-fructose 6-phosphate from D-ribose 5-phosphate and D-xylulose 5-phosphate (non-oxidative stage): step 2/3. In terms of biological role, transaldolase is important for the balance of metabolites in the pentose-phosphate pathway. The chain is Transaldolase from Pseudomonas syringae pv. tomato (strain ATCC BAA-871 / DC3000).